Consider the following 537-residue polypeptide: Eukaryotic translation initiation factor 3 subunit L (537 aa).

The PCI domain maps to 300–512 (TFSSILLYIQ…IHIADTKVSH (213 aa)).

The protein belongs to the eIF-3 subunit L family. In terms of assembly, component of the eukaryotic translation initiation factor 3 (eIF-3) complex.

It is found in the cytoplasm. Functionally, component of the eukaryotic translation initiation factor 3 (eIF-3) complex, which is involved in protein synthesis of a specialized repertoire of mRNAs and, together with other initiation factors, stimulates binding of mRNA and methionyl-tRNAi to the 40S ribosome. The eIF-3 complex specifically targets and initiates translation of a subset of mRNAs involved in cell proliferation. The polypeptide is Eukaryotic translation initiation factor 3 subunit L (Culex quinquefasciatus (Southern house mosquito)).